The primary structure comprises 347 residues: Bifunctional methylenetetrahydrofolate dehydrogenase/cyclohydrolase 2, mitochondrial (347 aa).

Substrate contacts are provided by residues 98 to 102 (YVRNK) and 145 to 147 (VQL). NAD(+)-binding positions include 214–216 (GRS) and R247. Substrate is bound at residue 323–327 (PGGVG).

Belongs to the tetrahydrofolate dehydrogenase/cyclohydrolase family. The cofactor is Mg(2+). Isoform 1, isoform 4 and isoform 5 are expressed in brain and placenta.

The protein localises to the mitochondrion inner membrane. The catalysed reaction is (6R)-5,10-methylene-5,6,7,8-tetrahydrofolate + NAD(+) = (6R)-5,10-methenyltetrahydrofolate + NADH. It catalyses the reaction (6R)-5,10-methenyltetrahydrofolate + H2O = (6R)-10-formyltetrahydrofolate + H(+). It carries out the reaction (6R)-5,10-methylene-5,6,7,8-tetrahydrofolate + NADP(+) = (6R)-5,10-methenyltetrahydrofolate + NADPH. Its pathway is one-carbon metabolism; tetrahydrofolate interconversion. Functionally, bifunctional mitochondrial folate-interconverting enzyme that has both NAD/NADP-dependent methylenetetrahydrofolate dehydrogenase and methenyltetrahydrofolate cyclohydrolase activities. The chain is Bifunctional methylenetetrahydrofolate dehydrogenase/cyclohydrolase 2, mitochondrial from Homo sapiens (Human).